The following is a 133-amino-acid chain: Ribosome-binding factor A (133 aa).

It belongs to the RbfA family. Monomer. Binds 30S ribosomal subunits, but not 50S ribosomal subunits or 70S ribosomes.

It localises to the cytoplasm. One of several proteins that assist in the late maturation steps of the functional core of the 30S ribosomal subunit. Associates with free 30S ribosomal subunits (but not with 30S subunits that are part of 70S ribosomes or polysomes). Required for efficient processing of 16S rRNA. May interact with the 5'-terminal helix region of 16S rRNA. In Cronobacter sakazakii (strain ATCC BAA-894) (Enterobacter sakazakii), this protein is Ribosome-binding factor A.